The sequence spans 112 residues: Carboxysome shell protein CcmK4 (112 aa).

Residues 6–92 (AVGSIETIGF…PHENVVAVLP (87 aa)) enclose the BMC domain.

This sequence belongs to the bacterial microcompartments protein family. CcmK subfamily. Homohexamer. Interacts with full-length CcmM. Forms mixed heterohexamers with CcmK3, probably with 1:5 CcmK3:CcmK4 stoichiometry. Only very weak interactions with CcmK1 and CcmK2 were seen.

It localises to the carboxysome. Functionally, a probably minor shell protein component of the carboxysome, a polyhedral inclusion where RuBisCO (ribulose bisphosphate carboxylase, rbcL-rbcS) is sequestered. The central pore probably regulates metabolite flux, as might the gaps between assembled homohexamers. Homohexamers make sheets that probably form the facets of the polyhedral carboxysome. This subunit probably makes both homohexamers and heterohexamers with CcmK3. This chain is Carboxysome shell protein CcmK4, found in Synechocystis sp. (strain ATCC 27184 / PCC 6803 / Kazusa).